Reading from the N-terminus, the 369-residue chain is Caffeine synthase 1 (369 aa).

Tyrosine 24 contacts S-adenosyl-L-homocysteine. Threonine 31 contacts caffeine. S-adenosyl-L-homocysteine is bound by residues cysteine 66, asparagine 71, aspartate 103, leucine 104, serine 138, and phenylalanine 139. Residues tyrosine 156, histidine 159, and tryptophan 160 each coordinate caffeine. Position 177 (asparagine 177) interacts with Mg(2+). Arginine 225 serves as a coordination point for caffeine. Residues aspartate 263, phenylalanine 265, and asparagine 266 each coordinate Mg(2+). Phenylalanine 321 contacts caffeine.

Belongs to the methyltransferase superfamily. Type-7 methyltransferase family. Mg(2+) is required as a cofactor.

The catalysed reaction is theobromine + S-adenosyl-L-methionine = caffeine + S-adenosyl-L-homocysteine + H(+). It catalyses the reaction 7-methylxanthine + S-adenosyl-L-methionine = theobromine + S-adenosyl-L-homocysteine + H(+). The protein operates within alkaloid biosynthesis. In terms of biological role, involved in the biosynthesis of caffeine. Catalyzes the conversion of 7-methylxanthine (7mX) to theobromine and of theobromine to caffeine. This chain is Caffeine synthase 1, found in Camellia crassicolumna (Evergreen tea).